A 204-amino-acid chain; its full sequence is Crossover junction endodeoxyribonuclease RuvC (204 aa).

Residues aspartate 7, glutamate 68, and aspartate 141 contribute to the active site. The Mg(2+) site is built by aspartate 7, glutamate 68, and aspartate 141. The disordered stretch occupies residues 164-204; that stretch reads QAVAAHRTSGASRTPGAAGTPGPSRTPGAPGTSRTLKGRTA.

Belongs to the RuvC family. As to quaternary structure, homodimer which binds Holliday junction (HJ) DNA. The HJ becomes 2-fold symmetrical on binding to RuvC with unstacked arms; it has a different conformation from HJ DNA in complex with RuvA. In the full resolvosome a probable DNA-RuvA(4)-RuvB(12)-RuvC(2) complex forms which resolves the HJ. The cofactor is Mg(2+).

Its subcellular location is the cytoplasm. It catalyses the reaction Endonucleolytic cleavage at a junction such as a reciprocal single-stranded crossover between two homologous DNA duplexes (Holliday junction).. Its function is as follows. The RuvA-RuvB-RuvC complex processes Holliday junction (HJ) DNA during genetic recombination and DNA repair. Endonuclease that resolves HJ intermediates. Cleaves cruciform DNA by making single-stranded nicks across the HJ at symmetrical positions within the homologous arms, yielding a 5'-phosphate and a 3'-hydroxyl group; requires a central core of homology in the junction. The consensus cleavage sequence is 5'-(A/T)TT(C/G)-3'. Cleavage occurs on the 3'-side of the TT dinucleotide at the point of strand exchange. HJ branch migration catalyzed by RuvA-RuvB allows RuvC to scan DNA until it finds its consensus sequence, where it cleaves and resolves the cruciform DNA. The sequence is that of Crossover junction endodeoxyribonuclease RuvC from Streptomyces griseus subsp. griseus (strain JCM 4626 / CBS 651.72 / NBRC 13350 / KCC S-0626 / ISP 5235).